A 481-amino-acid polypeptide reads, in one-letter code: FAD-linked oxidoreductase afoF (481 aa).

An N-terminal signal peptide occupies residues 1-16; sequence MRFLLQSITLVAAARA. The FAD-binding PCMH-type domain maps to 52–227; the sequence is SEWRPPTWTG…TAATFKMFDQ (176 aa). Asn82 is a glycosylation site (N-linked (GlcNAc...) asparagine). His92 carries the post-translational modification Pros-8alpha-FAD histidine. Asn196, Asn241, Asn276, Asn309, Asn312, and Asn376 each carry an N-linked (GlcNAc...) asparagine glycan.

Belongs to the oxygen-dependent FAD-linked oxidoreductase family. The cofactor is FAD.

Functionally, FAD-linked oxidoreductase; part of the gene cluster that mediates the biosynthesis of asperfuranone, a probable antitumor agent. The polyketide synthase afoG is responsible for producing the 3,5-dimethyloctadienone moiety from acetyl-CoA, three malonyl-CoA, and two S-adenosyl methionines (SAM). The 3,5-dimethyloctadienone moiety is then loaded onto the SAT domain of afoE and extended with four malonyl-CoA and one SAM, which leads to the formation of 2,4-dihydroxy-6-(5,7-dimethyl-2-oxo-trans-3-trans-5-nonadienyl)-3-methylbenzaldehyde (compound 2) after reductive release and aldol condensation. AfoD is the next enzyme in the biosynthesis sequence and hydroxylates the side chain at the benzylic position of compound 2. After benzylic hydroxylation, a furan ring is formed after five-member ring hemiacetal formation and water elimination. AfoF and afoC are proposed to oxidize the R-diketone proton and to reduce the unconjugated carbonyl group, respectively, to generate asperfuranone. Since no intermediates could be isolated from afoF and afoC deletants, the sequence of these two enzymes is not fully understood. Moreover, since afoC deletant still produces a small amount of asperfuranone, other endogenous oxidoreductases might catalyze the same reaction with much less efficiency. This Emericella nidulans (strain FGSC A4 / ATCC 38163 / CBS 112.46 / NRRL 194 / M139) (Aspergillus nidulans) protein is FAD-linked oxidoreductase afoF.